Here is a 321-residue protein sequence, read N- to C-terminus: Arginine-hydroxylase NDUFAF5, mitochondrial (321 aa).

The transit peptide at 1–25 directs the protein to the mitochondrion; the sequence is MNVSVKSLRGVSRTWRSFSSRQGMN.

The protein belongs to the methyltransferase superfamily. In terms of assembly, interacts with NDUFS7.

It is found in the mitochondrion inner membrane. In terms of biological role, arginine hydroxylase that mediates hydroxylation of 'Arg-111' of NDUFS7 and is involved in the assembly of mitochondrial NADH:ubiquinone oxidoreductase complex (complex I, MT-ND1) at early stages. May also have methyltransferase activity. The polypeptide is Arginine-hydroxylase NDUFAF5, mitochondrial (Danio rerio (Zebrafish)).